Consider the following 1170-residue polypeptide: Chromosome partition protein Smc (1170 aa).

ATP is bound at residue 32-39 (PNGCGKSN). Coiled coils occupy residues 169–215 (GVSK…AVVA), 245–365 (DRQR…DAAA), and 401–508 (EAAH…TQGK). Residues 520–623 (ALPRLWKKLH…VADDLAQALA (104 aa)) enclose the SMC hinge domain. Coiled coils occupy residues 664 to 944 (QEIE…KEKL) and 983 to 1020 (ERKV…LQAT).

Belongs to the SMC family. In terms of assembly, homodimer.

The protein localises to the cytoplasm. Functionally, required for chromosome condensation and partitioning. This is Chromosome partition protein Smc from Burkholderia pseudomallei (strain 1710b).